Consider the following 75-residue polypeptide: Conotoxin VnMSGL-0111 (75 aa).

Residues 1–20 (MSGLEIMVLTLLLLVSMATS) form the signal peptide. The propeptide occupies 21-44 (HQDGGEKQATQRDAINVRRRSITR). 3 disulfide bridges follow: C48/C60, C52/C69, and C59/C73.

This sequence belongs to the conotoxin O3 superfamily. Expressed by the venom duct.

It is found in the secreted. The chain is Conotoxin VnMSGL-0111 from Conus ventricosus (Mediterranean cone).